The chain runs to 25 residues: Aurein-5.2 (25 aa).

Expressed by the skin dorsal glands.

The protein localises to the secreted. Functionally, has antimicrobial activity against L.lactis and S.uberis. The chain is Aurein-5.2 from Ranoidea raniformis (Southern bell frog).